Consider the following 129-residue polypeptide: Protachykinin-1 (129 aa).

The N-terminal stretch at 1-19 (MKILVALAVFFLVSTQLFA) is a signal peptide. Positions 20 to 56 (EEIGANDDLNYWSDWYDSDQIKEELPEPFEHLLQRIA) are excised as a propeptide. Methionine 68 and methionine 107 each carry methionine amide.

It belongs to the tachykinin family. The substance P form is cleaved at Pro-59 by the prolyl endopeptidase FAP (seprase) activity (in vitro). Substance P is also cleaved and degraded by Angiotensin-converting enzyme (ACE) and neprilysin (MME).

Its subcellular location is the secreted. Its function is as follows. Tachykinins are active peptides which excite neurons, evoke behavioral responses, are potent vasodilators and secretagogues, and contract (directly or indirectly) many smooth muscles. The polypeptide is Protachykinin-1 (TAC1) (Homo sapiens (Human)).